The sequence spans 825 residues: Glycerol-3-phosphate acyltransferase 1, mitochondrial (825 aa).

Over 1 to 87 (MDESALTLGT…FFNPSIPSLG (87 aa)) the chain is Cytoplasmic. Residues 80–120 (NPSIPSLGLRNVIYINETHTRHRGWLARRLSYVLFIQERDV) form an important for mitochondrial localization region. An intramembrane segment occupies 88–118 (LRNVIYINETHTRHRGWLARRLSYVLFIQER). Over 119 to 825 (DVHKGMFATN…LEYILSLVVL (707 aa)) the chain is Cytoplasmic. Positions 230 to 235 (HRSHID) match the HXXXXD motif motif. R278, R279, K288, R293, and R328 together coordinate CoA. At S380 the chain carries Phosphoserine. Positions 435-455 (SRPSGAADEGTDMSINESRNA) are disordered. R461 contacts CoA. Residues S685 and S692 each carry the phosphoserine modification. 2 positions are modified to N6-acetyllysine: K777 and K781.

This sequence belongs to the GPAT/DAPAT family. As to expression, highly expressed in adipose tissues and lung. Low expression in liver.

It is found in the mitochondrion outer membrane. The catalysed reaction is sn-glycerol 3-phosphate + an acyl-CoA = a 1-acyl-sn-glycero-3-phosphate + CoA. It carries out the reaction (9Z,12Z)-octadecadienoyl-CoA + sn-glycerol 3-phosphate = 1-(9Z,12Z)-octadecadienoyl-sn-glycero-3-phosphate + CoA. The enzyme catalyses sn-glycerol 3-phosphate + (9Z)-octadecenoyl-CoA = 1-(9Z-octadecenoyl)-sn-glycero-3-phosphate + CoA. It catalyses the reaction sn-glycerol 3-phosphate + octadecanoyl-CoA = 1-octadecanoyl-sn-glycero-3-phosphate + CoA. The catalysed reaction is sn-glycerol 3-phosphate + hexadecanoyl-CoA = 1-hexadecanoyl-sn-glycero-3-phosphate + CoA. It carries out the reaction dodecanoyl-CoA + sn-glycerol 3-phosphate = 1-dodecanoyl-sn-glycerol 3-phosphate + CoA. The enzyme catalyses 1-acyl-sn-glycero-3-phospho-(1'-sn-glycerol) + an acyl-CoA = a 1,2-diacyl-sn-glycero-3-phospho-(1'-sn-glycerol) + CoA. It participates in phospholipid metabolism; CDP-diacylglycerol biosynthesis; CDP-diacylglycerol from sn-glycerol 3-phosphate: step 1/3. In terms of biological role, mitochondrial membrane protein that catalyzes the essential first step of biosynthesis of glycerolipids such as triglycerides, phosphatidic acids and lysophosphatidic acids. Esterifies acyl-group from acyl-coenzyme A (acyl-CoA) to the sn-1 position of glycerol-3-phosphate, to produce lysophosphatidic acid. Has a narrow hydrophobic binding cleft that selects for a linear acyl chain. Catalytic activity is higher for substrates with a 16-carbon acyl chain. This chain is Glycerol-3-phosphate acyltransferase 1, mitochondrial, found in Bos taurus (Bovine).